Here is a 112-residue protein sequence, read N- to C-terminus: uncharacterized protein (112 aa).

The region spanning 5–112 (IFQKIIKGII…LLGGKKLNKI (108 aa)) is the HIT domain. Residues 98–102 (HLHLH) carry the Histidine triad motif motif.

This is an uncharacterized protein from Buchnera aphidicola subsp. Baizongia pistaciae (strain Bp).